Consider the following 318-residue polypeptide: N-succinylornithine carbamoyltransferase (318 aa).

Carbamoyl phosphate is bound by residues 47-50 (SLRT), tryptophan 75, and arginine 110. Glutamate 142 contacts N(2)-succinyl-L-ornithine. 147–150 (HPLQ) is a carbamoyl phosphate binding site. N(2)-succinyl-L-ornithine contacts are provided by histidine 176 and lysine 236. A carbamoyl phosphate-binding site is contributed by 274–275 (CL). Residue arginine 278 coordinates N(2)-succinyl-L-ornithine. Residue arginine 302 participates in carbamoyl phosphate binding.

Belongs to the aspartate/ornithine carbamoyltransferase superfamily. SOTCase family. In terms of assembly, homotrimer.

It catalyses the reaction N(2)-succinyl-L-ornithine + carbamoyl phosphate = N(2)-succinyl-L-citrulline + phosphate + H(+). The protein operates within amino-acid biosynthesis; L-arginine biosynthesis. In terms of biological role, catalyzes the transfer of the carbamoyl group from carbamoyl phosphate to the delta-amino group of N(2)-succinyl-L-ornithine to produce N(2)-succinyl-L-citrulline. Is essential for arginine biosynthesis. Has no activity with either L-ornithine or L-aspartate as substrate. Also has no detectable AOTCase activity, being unable to convert N(2)-acetyl-L-ornithine to N(2)-acetyl-L-citrulline. The polypeptide is N-succinylornithine carbamoyltransferase (Bacteroides fragilis (strain 638R)).